The chain runs to 408 residues: LL-diaminopimelate aminotransferase (408 aa).

2 residues coordinate substrate: Tyr15 and Gly42. Residues Tyr72, 108-109 (SK), Tyr132, Asn187, Tyr218, and 246-248 (SFS) each bind pyridoxal 5'-phosphate. Substrate contacts are provided by Lys109, Tyr132, and Asn187. Lys249 is subject to N6-(pyridoxal phosphate)lysine. Residues Arg257 and Asn292 each contribute to the pyridoxal 5'-phosphate site. Substrate is bound by residues Asn292 and Arg388.

Belongs to the class-I pyridoxal-phosphate-dependent aminotransferase family. LL-diaminopimelate aminotransferase subfamily. In terms of assembly, homodimer. Requires pyridoxal 5'-phosphate as cofactor.

It carries out the reaction (2S,6S)-2,6-diaminopimelate + 2-oxoglutarate = (S)-2,3,4,5-tetrahydrodipicolinate + L-glutamate + H2O + H(+). It functions in the pathway amino-acid biosynthesis; L-lysine biosynthesis via DAP pathway; LL-2,6-diaminopimelate from (S)-tetrahydrodipicolinate (aminotransferase route): step 1/1. Functionally, involved in the synthesis of meso-diaminopimelate (m-DAP or DL-DAP), required for both lysine and peptidoglycan biosynthesis. Catalyzes the direct conversion of tetrahydrodipicolinate to LL-diaminopimelate. The chain is LL-diaminopimelate aminotransferase from Prochlorococcus marinus (strain MIT 9312).